The chain runs to 84 residues: Putative defensin-like protein 114 (84 aa).

Residues M1–C24 form the signal peptide. Disulfide bonds link C41-C81, C47-C69, C54-C79, and C58-C80.

This sequence belongs to the DEFL family.

The protein resides in the secreted. In Arabidopsis thaliana (Mouse-ear cress), this protein is Putative defensin-like protein 114.